The chain runs to 317 residues: Transaldolase (317 aa).

K132 (schiff-base intermediate with substrate) is an active-site residue.

Belongs to the transaldolase family. Type 1 subfamily. Homodimer.

It localises to the cytoplasm. It catalyses the reaction D-sedoheptulose 7-phosphate + D-glyceraldehyde 3-phosphate = D-erythrose 4-phosphate + beta-D-fructose 6-phosphate. The protein operates within carbohydrate degradation; pentose phosphate pathway; D-glyceraldehyde 3-phosphate and beta-D-fructose 6-phosphate from D-ribose 5-phosphate and D-xylulose 5-phosphate (non-oxidative stage): step 2/3. Functionally, transaldolase is important for the balance of metabolites in the pentose-phosphate pathway. This Histophilus somni (strain 129Pt) (Haemophilus somnus) protein is Transaldolase.